Consider the following 306-residue polypeptide: GTP cyclohydrolase FolE2 (306 aa).

This sequence belongs to the GTP cyclohydrolase IV family.

It catalyses the reaction GTP + H2O = 7,8-dihydroneopterin 3'-triphosphate + formate + H(+). The protein operates within cofactor biosynthesis; 7,8-dihydroneopterin triphosphate biosynthesis; 7,8-dihydroneopterin triphosphate from GTP: step 1/1. In terms of biological role, converts GTP to 7,8-dihydroneopterin triphosphate. The chain is GTP cyclohydrolase FolE2 from Xanthomonas oryzae pv. oryzae (strain MAFF 311018).